A 555-amino-acid polypeptide reads, in one-letter code: Coiled-coil domain-containing protein 102A (555 aa).

Disordered regions lie at residues 1 to 68, 136 to 202, and 214 to 254; these read MSHG…ADGD, LAGA…GSQE, and PEEP…EEDA. 3 positions are modified to phosphoserine: serine 12, serine 26, and serine 28. The span at 37–61 shows a compositional bias: pro residues; sequence SLPPTPPSGTPSPGPPPALPLPPTP. The stretch at 72–161 forms a coiled coil; sequence REELRLRELE…ARGRELARLR (90 aa). 2 stretches are compositionally biased toward basic and acidic residues: residues 136-159 and 166-183; these read LAGA…ELAR and GVDR…REQE. The span at 224-236 shows a compositional bias: low complexity; that stretch reads RSAGAGAPRGSSG. 2 coiled-coil regions span residues 268–401 and 432–522; these read QKVL…RRQT and KLKK…QNAP. Positions 478–555 are disordered; that stretch reads ELDEAHNQAR…EDEDLQIQVA (78 aa). The segment covering 536–555 has biased composition (acidic residues); sequence EAGDGASDLDEDEDLQIQVA. Residue serine 542 is modified to Phosphoserine.

The polypeptide is Coiled-coil domain-containing protein 102A (CCDC102A) (Bos taurus (Bovine)).